Here is a 466-residue protein sequence, read N- to C-terminus: 3-isopropylmalate dehydratase large subunit 1 (466 aa).

Residues Cys-347, Cys-407, and Cys-410 each coordinate [4Fe-4S] cluster.

The protein belongs to the aconitase/IPM isomerase family. LeuC type 1 subfamily. As to quaternary structure, heterodimer of LeuC and LeuD. [4Fe-4S] cluster is required as a cofactor.

The catalysed reaction is (2R,3S)-3-isopropylmalate = (2S)-2-isopropylmalate. The protein operates within amino-acid biosynthesis; L-leucine biosynthesis; L-leucine from 3-methyl-2-oxobutanoate: step 2/4. Functionally, catalyzes the isomerization between 2-isopropylmalate and 3-isopropylmalate, via the formation of 2-isopropylmaleate. The polypeptide is 3-isopropylmalate dehydratase large subunit 1 (Salmonella choleraesuis (strain SC-B67)).